Reading from the N-terminus, the 121-residue chain is Protein VraC (121 aa).

The sequence is that of Protein VraC (vraC) from Staphylococcus aureus (strain Mu3 / ATCC 700698).